We begin with the raw amino-acid sequence, 213 residues long: MPVSEIMAGAALGLALQVLHDAIKKAKDRSLTTRCILDRLDATIFRITPLVTQVDKLSEEVEDSPRKVIEDLKHLLEKAVSLVEAYAELRRRNLLKKFRYKRRIKELEASLRWMVDVDVQVNQWVDIKELMAKMSEMNTKLDEITRQPTDCICFKSNHSTSQSSSQNIVEETDRSLEEIVECSSDGSKPKIDIHIHWSSRKRNKDREIRFVLK.

The 153-residue stretch at 1 to 153 folds into the RPW8 domain; that stretch reads MPVSEIMAGA…ITRQPTDCIC (153 aa). A helical membrane pass occupies residues 7 to 23; it reads MAGAALGLALQVLHDAI. Coiled coils occupy residues 70–93 and 125–147; these read EDLK…RRRN and VDIK…ITRQ. Asparagine 157 carries an N-linked (GlcNAc...) asparagine glycan.

Belongs to the plant RPW8 protein family.

It localises to the membrane. In terms of biological role, probable disease resistance (R) protein. This Arabidopsis thaliana (Mouse-ear cress) protein is RPW8-like protein 3.